We begin with the raw amino-acid sequence, 132 residues long: Small ribosomal subunit protein uS8 (132 aa).

The protein belongs to the universal ribosomal protein uS8 family. In terms of assembly, part of the 30S ribosomal subunit. Contacts proteins S5 and S12.

Its function is as follows. One of the primary rRNA binding proteins, it binds directly to 16S rRNA central domain where it helps coordinate assembly of the platform of the 30S subunit. This Ligilactobacillus salivarius (strain UCC118) (Lactobacillus salivarius) protein is Small ribosomal subunit protein uS8.